The chain runs to 669 residues: Matrix metalloproteinase-15 (669 aa).

The or 45 signal peptide spans 1-41; sequence MGSDPSAPGRPGWTGSLLGDREEAARPRLLPLLLVLLGCLG. Residues 42 to 131 constitute a propeptide that is removed on maturation; it reads LGVAAEDAEV…KANLRRRRKR (90 aa). A Cysteine switch motif is present at residues 109 to 116; it reads PRCGVPDQ. Position 111 (cysteine 111) interacts with Zn(2+). Residues 132-625 lie on the Extracellular side of the membrane; it reads YALTGRKWNN…QMEEVARTVN (494 aa). An N-linked (GlcNAc...) asparagine glycan is attached at asparagine 150. Histidine 259 contributes to the Zn(2+) binding site. Residue glutamate 260 is part of the active site. Zn(2+) is bound by residues histidine 263 and histidine 269. Positions 300–370 are disordered; the sequence is QQLYGTPDGQ…RPDQYGPNIC (71 aa). The span at 305–322 shows a compositional bias: low complexity; sequence TPDGQPQPTQPLPTVTPR. The segment covering 333 to 342 has biased composition (pro residues); the sequence is RPPQPPPPGG. 4 Hemopexin repeats span residues 367–415, 416–461, 463–511, and 512–559; these read PNIC…WRGL, PGDI…GLGI, YDRI…QGIP, and ASPK…FMGC. A disulfide bond links cysteine 370 and cysteine 559. A disordered region spans residues 574 to 593; the sequence is RPPFNPHGGAEPGADSAEGD. Serine 589 bears the Phosphoserine mark. A helical transmembrane segment spans residues 626–646; that stretch reads VVMVLVPLLLLLCVLGLTYAL. At 647–669 the chain is on the cytoplasmic side; sequence VQMQRKGAPRVLLYCKRSLQEWV.

Belongs to the peptidase M10A family. Zn(2+) serves as cofactor. The cofactor is Ca(2+). In terms of processing, the precursor is cleaved by a furin endopeptidase. In terms of tissue distribution, appeared to be synthesized preferentially in liver, placenta, testis, colon and intestine. Substantial amounts are also detected in pancreas, kidney, lung, heart and skeletal muscle.

It localises to the membrane. Endopeptidase that degrades various components of the extracellular matrix. May activate progelatinase A. The chain is Matrix metalloproteinase-15 (MMP15) from Homo sapiens (Human).